The chain runs to 120 residues: Large ribosomal subunit protein uL24 (120 aa).

Residues 1 to 26 form a disordered region; that stretch reads MVRVISSQPRKQRKARYNAPHHMRGS. Basic residues predominate over residues 10–24; that stretch reads RKQRKARYNAPHHMR.

This sequence belongs to the universal ribosomal protein uL24 family. As to quaternary structure, part of the 50S ribosomal subunit.

Its function is as follows. One of two assembly initiator proteins, it binds directly to the 5'-end of the 23S rRNA, where it nucleates assembly of the 50S subunit. In terms of biological role, located at the polypeptide exit tunnel on the outside of the subunit. This is Large ribosomal subunit protein uL24 from Methanospirillum hungatei JF-1 (strain ATCC 27890 / DSM 864 / NBRC 100397 / JF-1).